Reading from the N-terminus, the 90-residue chain is Phaiodotoxin (90 aa).

A signal peptide spans 1–18 (MKTIPLLFLLFIYFECDG). An LCN-type CS-alpha/beta domain is found at 19–90 (KFIRHKDESF…CFGALESKCA (72 aa)). 4 disulfides stabilise this stretch: Cys31-Cys56, Cys41-Cys68, Cys45-Cys70, and Cys81-Cys89.

In terms of tissue distribution, expressed by the venom gland.

It localises to the secreted. Functionally, sodium channel (Nav) specific neurotoxin. Causes impairment of movement and mild paralysis in crickets at a dose of 0.5 ug per animal. A dose of 0.8 ug per cricket causes clear flaccid paralysis. A dose of 1.0 ug per cricket causes death within 2 hours. Is not toxic to mice at a dose of 100 ug per 20 g mouse weight. The chain is Phaiodotoxin from Anuroctonus phaiodactylus (Mafia scorpion).